The chain runs to 232 residues: Ribonuclease 3 (232 aa).

The RNase III domain maps to 7-135 (IQAVESKLKF…ILGAVYLDGG (129 aa)). E48 provides a ligand contact to Mg(2+). D52 is an active-site residue. Positions 121 and 124 each coordinate Mg(2+). E124 is an active-site residue. A DRBM domain is found at 160 to 229 (NPKNRLQQFT…AKQALSTHDD (70 aa)).

It belongs to the ribonuclease III family. Homodimer. Mg(2+) serves as cofactor.

The protein localises to the cytoplasm. It catalyses the reaction Endonucleolytic cleavage to 5'-phosphomonoester.. Functionally, digests double-stranded RNA. Involved in the processing of primary rRNA transcript to yield the immediate precursors to the large and small rRNAs (23S and 16S). Processes some mRNAs, and tRNAs when they are encoded in the rRNA operon. Processes pre-crRNA and tracrRNA of type II CRISPR loci if present in the organism. The sequence is that of Ribonuclease 3 from Chlamydia muridarum (strain MoPn / Nigg).